Consider the following 447-residue polypeptide: Tetratricopeptide repeat protein 23 (447 aa).

TPR repeat units follow at residues 45 to 78, 137 to 170, 186 to 219, and 356 to 389; these read LHLC…TRIC, IELF…SKEL, ARIR…VEIS, and AETY…QTLL.

Found Associated with the EvC complex composed of EFCAB7, IQCE, EVC2 and EVC.

Its subcellular location is the cell projection. The protein localises to the cilium. Its function is as follows. Participates positively in the ciliary Hedgehog (Hh) signaling. This is Tetratricopeptide repeat protein 23 (TTC23) from Homo sapiens (Human).